The following is a 456-amino-acid chain: Gustatory receptor for sugar taste 64a (456 aa).

The disordered stretch occupies residues 1 to 30 (MKGPNLNFRKTPSKDNGVKQVESLARPETP). Topologically, residues 1 to 91 (MKGPNLNFRK…RESNPRRVRF (91 aa)) are cytoplasmic. The helical transmembrane segment at 92–114 (AYKSIPMFVTLIFMIATSILFLS) threads the bilayer. At 115–128 (MFTHLLKIGITAKN) the chain is on the extracellular side. The chain crosses the membrane as a helical span at residues 129–150 (FVGLVFFGCVLSAYVVFIRLAK). Position 131 (Gly131) interacts with sucrose. Residues 151–182 (KWPAVVRIWTRTEIPFTKPPYEIPKRNLSRRV) lie on the Cytoplasmic side of the membrane. The helical transmembrane segment at 183–205 (QLAALAIIGLSLGEHALYQVSAI) threads the bilayer. The sucrose site is built by Glu196, His197, and Tyr234. D-maltose is bound by residues Glu196, His197, Tyr234, Asn253, and Thr257. The Extracellular segment spans residues 206–245 (LSYTRRIQMCANITTVPSFNNYMQTNYDYVFQLLPYSPII). Residues 246–271 (AVLILLINGACTFVWNYMDLFIMMIS) form a helical membrane-spanning segment. Residue Thr257 coordinates sucrose. The Cytoplasmic segment spans residues 272–318 (KGLSYRFEQITTRIRKLEHEEVCESVFIQIREHYVKMCELLEFVDSA). A helical transmembrane segment spans residues 319–342 (MSSLILLSCVNNLYFVCYQLLNVF). The Extracellular segment spans residues 343–350 (NKLRWPIN). The chain crosses the membrane as a helical span at residues 351 to 373 (YIYFWYSLLYLIGRTAFVFLTAA). Tyr353 is a sucrose binding site. Position 353 (Tyr353) interacts with D-maltose. At 374–421 (DINEESKRGLGVLRRVSSRSWCVEVERLIFQMTTQTVALSGKKFYFLT) the chain is on the cytoplasmic side. The helical transmembrane segment at 422 to 441 (RRLLFGMAGTIVTYELVLLQ) threads the bilayer. Over 442 to 456 (FDEPNRRKGLQPLCA) the chain is Extracellular.

This sequence belongs to the insect chemoreceptor superfamily. Gustatory receptor (GR) family. Gr5a subfamily. Homotetramer. Expressed in Gr5a-expressing sugar-sensing cells.

It localises to the cell membrane. In terms of biological role, one of the few identified sugar gustatory receptors identified so far and which promotes the starvation-induced increase of feeding motivation. Required in combination with Gr64f to detect sucrose, maltose, and glucose. This Drosophila melanogaster (Fruit fly) protein is Gustatory receptor for sugar taste 64a (Gr64a).